The sequence spans 299 residues: Ficolin-3 (299 aa).

An N-terminal signal peptide occupies residues 1–23 (MDLLWILPSLWLLLLGGPACLKT). The tract at residues 44-81 (PSCPGAPGSPGEKGAPGPQGPPGPPGKMGPKGEPGDPV) is disordered. Residues 48 to 80 (GAPGSPGEKGAPGPQGPPGPPGKMGPKGEPGDP) form the Collagen-like domain. Hydroxyproline occurs at positions 50, 53, 59, 65, 68, and 77. Pro residues predominate over residues 61–70 (PQGPPGPPGK). In terms of domain architecture, Fibrinogen C-terminal spans 84-299 (LRCQEGPRNC…PYRRVRMMLR (216 aa)). Disulfide bonds link Cys-86-Cys-110 and Cys-93-Cys-121. Asn-189 carries an N-linked (GlcNAc...) (complex) asparagine glycan. Residues Asp-237, Asp-239, Ser-241, and Ser-243 each coordinate Ca(2+). The cysteines at positions 245 and 258 are disulfide-linked. An a carbohydrate-binding site is contributed by 258–259 (CY).

Belongs to the ficolin lectin family. Homotrimer. May form an octadecamer consisting of an elementary trimer unit. Does not interact with fibronectin, elastin or zymosan. Interacts with MASP1 and MASP2. The N-terminus is blocked. Liver and lung. In liver it is produced by bile duct epithelial cells and hepatocytes. In lung it is produced by both ciliated bronchial epithelial cells and type II alveolar epithelial cells.

The protein localises to the secreted. In terms of biological role, may function in innate immunity through activation of the lectin complement pathway. Calcium-dependent and GlcNAc-binding lectin. Has affinity with GalNAc, GlcNAc, D-fucose, as mono/oligosaccharide and lipopolysaccharides from S.typhimurium and S.minnesota. The sequence is that of Ficolin-3 (FCN3) from Homo sapiens (Human).